The sequence spans 188 residues: Capsid protein (188 aa).

Belongs to the tymoviruses capsid protein family.

It is found in the virion. Self-assembles to form a T=3 icosahedral capsid composed of 180 copies of the capsid protein. The capsid encapsulates the single-stranded RNA genome. The protein is Capsid protein of Theobroma cacao (Cacao).